A 264-amino-acid chain; its full sequence is uncharacterized protein (264 aa).

The next 6 membrane-spanning stretches (helical) occupy residues 23–43 (LIFL…TALI), 59–79 (FDTF…YYFL), 91–111 (LVLS…FYAL), 150–170 (FSEL…VGLL), 190–210 (AGIY…LNVW), and 233–253 (WIWS…LFVI).

The protein localises to the cell membrane. This is an uncharacterized protein from Mycoplasma genitalium (strain ATCC 33530 / DSM 19775 / NCTC 10195 / G37) (Mycoplasmoides genitalium).